A 227-amino-acid chain; its full sequence is Cytidylate kinase (227 aa).

12–20 (GPSGAGKGT) is an ATP binding site.

The protein belongs to the cytidylate kinase family. Type 1 subfamily.

It localises to the cytoplasm. The catalysed reaction is CMP + ATP = CDP + ADP. The enzyme catalyses dCMP + ATP = dCDP + ADP. This Salmonella paratyphi A (strain ATCC 9150 / SARB42) protein is Cytidylate kinase.